Here is a 131-residue protein sequence, read N- to C-terminus: Glycine cleavage system H protein (131 aa).

The 83-residue stretch at 24 to 106 (TVRVGITDYA…YGEGWLVELQ (83 aa)) folds into the Lipoyl-binding domain. An N6-lipoyllysine modification is found at K65.

This sequence belongs to the GcvH family. The glycine cleavage system is composed of four proteins: P, T, L and H. (R)-lipoate serves as cofactor.

Its function is as follows. The glycine cleavage system catalyzes the degradation of glycine. The H protein shuttles the methylamine group of glycine from the P protein to the T protein. The chain is Glycine cleavage system H protein from Mycolicibacterium gilvum (strain PYR-GCK) (Mycobacterium gilvum (strain PYR-GCK)).